The following is a 505-amino-acid chain: 2,3-bisphosphoglycerate-independent phosphoglycerate mutase (505 aa).

2 residues coordinate Mn(2+): D13 and S63. Catalysis depends on S63, which acts as the Phosphoserine intermediate. Substrate-binding positions include H124, 153–154, R183, R189, 254–257, and K330; these read RD and RADR. Mn(2+) is bound by residues D396, H400, D437, H438, and H456.

The protein belongs to the BPG-independent phosphoglycerate mutase family. Monomer. Mn(2+) serves as cofactor.

It carries out the reaction (2R)-2-phosphoglycerate = (2R)-3-phosphoglycerate. It participates in carbohydrate degradation; glycolysis; pyruvate from D-glyceraldehyde 3-phosphate: step 3/5. Functionally, catalyzes the interconversion of 2-phosphoglycerate and 3-phosphoglycerate. This is 2,3-bisphosphoglycerate-independent phosphoglycerate mutase from Ruegeria pomeroyi (strain ATCC 700808 / DSM 15171 / DSS-3) (Silicibacter pomeroyi).